The following is a 319-amino-acid chain: Ribonucleoside-diphosphate reductase small chain (319 aa).

Fe cation is bound by residues Asp-70, Glu-101, and His-104. Tyr-108 is an active-site residue. Residues Glu-163, Glu-197, and His-200 each coordinate Fe cation. Residues 313–319 (FSLDVDF) form an interaction with R1 region.

The protein belongs to the ribonucleoside diphosphate reductase small chain family. As to quaternary structure, interacts with RNR1/OPG080 subunit. Can interact with host RNR1 supunit. Requires Fe cation as cofactor.

It carries out the reaction a 2'-deoxyribonucleoside 5'-diphosphate + [thioredoxin]-disulfide + H2O = a ribonucleoside 5'-diphosphate + [thioredoxin]-dithiol. In terms of biological role, ribonucleoside-diphosphate reductase holoenzyme provides the precursors necessary for viral DNA synthesis. Allows virus growth in non-dividing cells. Catalyzes the biosynthesis of deoxyribonucleotides from the corresponding ribonucleotides. This is Ribonucleoside-diphosphate reductase small chain (OPG048) from Bos taurus (Bovine).